The following is a 188-amino-acid chain: Probable RNA-binding protein 18 (188 aa).

The 82-residue stretch at 23–104 (HRLWIGNIDP…KKLVVRWAHA (82 aa)) folds into the RRM domain. Residues 151-188 (EENPDDYSGPSAYTYNKPPDKREKRSQPYHKHFRKHRR) form a disordered region. Residues 177–188 (QPYHKHFRKHRR) show a composition bias toward basic residues.

This is Probable RNA-binding protein 18 (rbm18) from Danio rerio (Zebrafish).